The primary structure comprises 203 residues: Glycerol-3-phosphate acyltransferase (203 aa).

4 consecutive transmembrane segments (helical) span residues 3 to 23 (LASA…AILV), 75 to 95 (LGLE…GHLF), 113 to 133 (VILG…LIVA), and 156 to 176 (LLTG…LIYW).

It belongs to the PlsY family. As to quaternary structure, probably interacts with PlsX.

It is found in the cell inner membrane. It carries out the reaction an acyl phosphate + sn-glycerol 3-phosphate = a 1-acyl-sn-glycero-3-phosphate + phosphate. It participates in lipid metabolism; phospholipid metabolism. Its function is as follows. Catalyzes the transfer of an acyl group from acyl-phosphate (acyl-PO(4)) to glycerol-3-phosphate (G3P) to form lysophosphatidic acid (LPA). This enzyme utilizes acyl-phosphate as fatty acyl donor, but not acyl-CoA or acyl-ACP. The protein is Glycerol-3-phosphate acyltransferase of Thioalkalivibrio sulfidiphilus (strain HL-EbGR7).